A 207-amino-acid polypeptide reads, in one-letter code: MVQRSKSSANWLREHFNDPFVKQAQKDGYRSRASYKLLEIQEKDRLIRPGMSVIDLGAAPGGWSQVTSRLIGGQGRLIASDILEMDSIADVTFIQGDFTHDEVLQRILEAVGDSHVDLVISDMAPNMSGTPAVDIPRAMFLCELALDLATRVLKPGGDFLIKIFQGEGFDVYLKDVRSKFDKVQMRKPSSSRDRSREQYLLGRGFKG.

Residues Gly61, Trp63, Asp81, Asp97, and Asp122 each contribute to the S-adenosyl-L-methionine site. The Proton acceptor role is filled by Lys162.

The protein belongs to the class I-like SAM-binding methyltransferase superfamily. RNA methyltransferase RlmE family.

Its subcellular location is the cytoplasm. It catalyses the reaction uridine(2552) in 23S rRNA + S-adenosyl-L-methionine = 2'-O-methyluridine(2552) in 23S rRNA + S-adenosyl-L-homocysteine + H(+). In terms of biological role, specifically methylates the uridine in position 2552 of 23S rRNA at the 2'-O position of the ribose in the fully assembled 50S ribosomal subunit. This chain is Ribosomal RNA large subunit methyltransferase E, found in Pseudomonas putida (strain ATCC 700007 / DSM 6899 / JCM 31910 / BCRC 17059 / LMG 24140 / F1).